The chain runs to 256 residues: MTMPFYTSPEQLMRERSELARKGIARGRSVVVLKYAGGVLFVAENPSTTLHKVSEIYDRIGFAAVGRYSEFESLRVAGVRIADVRGYSYDRRDVTGRALANTYAQHLGAIFTEQIKPFEVEICVAEVGQTADNDQLYRLTYDGSIVDEPQYVVMGGQADTITTTLKDSFSDGLELAEAAGLAIRALSSGGEGTRELGVGQLEVAVLDRARPNRTFRRITGAALKALLPSQEESGSTDGEASGDAGDDKKTGDDKKS.

Positions 226–256 (LLPSQEESGSTDGEASGDAGDDKKTGDDKKS) are disordered. Residues 245 to 256 (GDDKKTGDDKKS) show a composition bias toward basic and acidic residues.

Belongs to the peptidase T1A family. In terms of assembly, the 20S proteasome core is composed of 14 alpha and 14 beta subunits that assemble into four stacked heptameric rings, resulting in a barrel-shaped structure. The two inner rings, each composed of seven catalytic beta subunits, are sandwiched by two outer rings, each composed of seven alpha subunits. The catalytic chamber with the active sites is on the inside of the barrel. Has a gated structure, the ends of the cylinder being occluded by the N-termini of the alpha-subunits. Is capped by the proteasome-associated ATPase, ARC.

The protein localises to the cytoplasm. The protein operates within protein degradation; proteasomal Pup-dependent pathway. The formation of the proteasomal ATPase ARC-20S proteasome complex, likely via the docking of the C-termini of ARC into the intersubunit pockets in the alpha-rings, may trigger opening of the gate for substrate entry. Interconversion between the open-gate and close-gate conformations leads to a dynamic regulation of the 20S proteasome proteolysis activity. Component of the proteasome core, a large protease complex with broad specificity involved in protein degradation. This Saccharopolyspora erythraea (strain ATCC 11635 / DSM 40517 / JCM 4748 / NBRC 13426 / NCIMB 8594 / NRRL 2338) protein is Proteasome subunit alpha.